Here is a 217-residue protein sequence, read N- to C-terminus: Small ribosomal subunit protein uS3 (217 aa).

One can recognise a KH type-2 domain in the interval 40–110 (IRDLINKGFN…EVYINIHEVR (71 aa)).

It belongs to the universal ribosomal protein uS3 family. As to quaternary structure, part of the 30S ribosomal subunit. Forms a tight complex with proteins S10 and S14.

Its function is as follows. Binds the lower part of the 30S subunit head. Binds mRNA in the 70S ribosome, positioning it for translation. The sequence is that of Small ribosomal subunit protein uS3 from Rickettsia africae (strain ESF-5).